Here is a 114-residue protein sequence, read N- to C-terminus: Transcription factor S1 (114 aa).

Residues 1–43 form an N-ZR region; sequence MIVVKFCPKCNSMMVPKKSNGKNVYRCTKCGYEKEVPETTIVV. Residues Cys7, Cys10, Cys27, Cys30, Cys75, and Cys78 each coordinate Zn(2+). Positions 63-114 are C-ZR; the sequence is MPSGAQKIKGVLCPSCKNDEAYFWILQTRRADEPPTRFYKCTKCGKVWREYE. Residues 71–111 form a TFIIS-type zinc finger; that stretch reads KGVLCPSCKNDEAYFWILQTRRADEPPTRFYKCTKCGKVWR. Active-site residues include Asp94 and Glu95. Residues Cys103 and Cys106 each contribute to the Zn(2+) site.

The protein belongs to the archaeal RpoM/eukaryotic RPA12/RPB9/RPC11 RNA polymerase family. Interacts with RNA polymerase; probably competes with TFS4 for the same binding site. Zn(2+) is required as a cofactor.

In terms of biological role, induces RNA cleavage activity in the RNA polymerase. Induces rapid cleavage of a stalled transcription elongation complex with a 2-nucleotide reduction at the 3' end of the nascent RNA. Truncated RNA is able to resume elongation. During transcription elongation it enhances processivity. Involved in transcriptional proofreading and fidelity. Misincorporation of nucleotides during elongation of transcription leads to arrested elongation complexes which are rescued by TFS-promoted removal of a dinucleotide from the 3'-end. TFS1 is able to induce a cleavage resynthesis cycle in stalled elongation complexes (resulting from the next missing nucleotide or a reduced incorporation rate of a wrong nucleotide) preventing misincorporation and enabling proofreading in a post-incorporation manner. Pausing of elongation complexes is the main determinant of TFS-induced RNA cleavage. The polypeptide is Transcription factor S1 (Saccharolobus solfataricus (strain ATCC 35092 / DSM 1617 / JCM 11322 / P2) (Sulfolobus solfataricus)).